Consider the following 2544-residue polypeptide: DNA polymerase theta (2544 aa).

Positions methionine 1–serine 13 are enriched in basic residues. A disordered region spans residues methionine 1–lysine 57. Over residues serine 14–serine 29 the composition is skewed to low complexity. ATP-binding positions include glutamine 95 and alanine 114–threonine 121. A Helicase ATP-binding domain is found at leucine 101–aspartate 285. A helicase activity region spans residues leucine 101–alanine 551. The short motif at aspartate 215 to histidine 218 is the DEAH box element. A Helicase C-terminal domain is found at glycine 320–alanine 551. The interaction with RAD51 stretch occupies residues aspartate 844–methionine 890. Residues proline 896 to aspartate 955 form a disordered region. Positions serine 898–serine 911 are enriched in low complexity. The span at glycine 933–lysine 945 shows a compositional bias: polar residues. Residues proline 946–aspartate 955 are compositionally biased toward basic and acidic residues. Residue lysine 983 is modified to N6-acetyllysine. Positions leucine 1022–proline 1034 are enriched in polar residues. 2 disordered regions span residues leucine 1022–arginine 1058 and valine 1128–leucine 1167. Over residues valine 1128 to alanine 1139 the composition is skewed to low complexity. The segment covering alanine 1140–asparagine 1155 has biased composition (basic and acidic residues). Serine 1265 bears the Phosphoserine mark. Disordered stretches follow at residues glycine 1266–alanine 1288 and glutamine 1331–aspartate 1353. Phosphoserine occurs at positions 1438, 1442, 1444, and 1449. The tract at residues phenylalanine 1478–glutamine 1501 is disordered. Positions proline 1492 to glutamine 1501 are enriched in polar residues. Residues serine 1511, serine 1519, serine 1585, and serine 1592 each carry the phosphoserine modification. The tract at residues glutamate 1557 to alanine 1591 is disordered. The span at threonine 1578–alanine 1591 shows a compositional bias: polar residues. Basic and acidic residues-rich tracts occupy residues valine 1606–lysine 1616 and asparagine 1628–isoleucine 1638. Residues valine 1606–alanine 1697 are disordered. The span at aspartate 1641–proline 1652 shows a compositional bias: polar residues. A compositionally biased stretch (basic and acidic residues) spans valine 1656–alanine 1667. The residue at position 1710 (threonine 1710) is a Phosphothreonine. The interval alanine 2052–glutamate 2538 is DNA polymerase activity. Loop regions lie at residues lysine 2097–phenylalanine 2132 and glutamate 2212–proline 2276. Residues methionine 2104–arginine 2117 show a composition bias toward polar residues. Residues methionine 2104–arginine 2124 are disordered. Residue aspartate 2284 is the For DNA polymerase activity of the active site. Residues aspartate 2284 and tyrosine 2285 each coordinate Mg(2+). Residues glutamine 2445 to isoleucine 2489 form a loop 3 region. Aspartate 2494 is a Mg(2+) binding site.

It belongs to the DNA polymerase type-A family. In terms of assembly, homomultimer; forms homodimers and homotetramers. Interacts with RAD51. Interacts with ORC2 and ORC4. Interacts with RHNO1; interaction takes place during mitosis and promotes POLQ recruitment to DNA damage sites. Interacts (when phosphorylated) with TOPBP1 (via BRCT domains 7 and 8); promoting POLQ recruitment to DNA damage sites. It depends on Mg(2+) as a cofactor. Phosphorylated by PLK1; promoting interaction with TOPBP1 and recruitment to DNA damage sites.

It localises to the nucleus. It is found in the chromosome. The enzyme catalyses DNA(n) + a 2'-deoxyribonucleoside 5'-triphosphate = DNA(n+1) + diphosphate. It carries out the reaction ATP + H2O = ADP + phosphate + H(+). Its function is as follows. Low-fidelity DNA polymerase with a helicase activity that promotes microhomology-mediated end-joining (MMEJ), an alternative non-homologous end-joining (NHEJ) machinery required to repair double-strand breaks in DNA during mitosis. MMEJ is an error-prone repair pathway that produces deletions of sequences from the strand being repaired and promotes genomic rearrangements, such as telomere fusions, some of them leading to cellular transformation. MMEJ is required during mitosis to repair persistent double-strand breaks that originate in S-phase. Although error-prone, MMEJ protects against chromosomal instability and tumorigenesis. The polymerase acts by binding directly the 2 ends of resected double-strand breaks, allowing microhomologous sequences in the overhangs to form base pairs. It then extends each strand from the base-paired region using the opposing overhang as a template. Requires partially resected DNA containing 2 to 6 base pairs of microhomology to perform MMEJ. The polymerase lacks proofreading activity and is highly promiscuous: unlike most polymerases, promotes extension of ssDNA and partial ssDNA (pssDNA) substrates. When the ends of a break do not contain terminal microhomology must identify embedded complementary sequences through a scanning step. Also acts as a DNA helicase, promoting dissociation of the replication protein A complex (RPA/RP-A), composed of RPA1, RPA2 and RPA3, from resected double-strand breaks to allow their annealing and subsequent joining by MMEJ. Removal of RPA/RP-A complex proteins prevents RAD51 accumulation at resected ends, thereby inhibiting homology-recombination repair (HR) pathway. Also shows RNA-directed DNA polymerase activity to mediate DNA repair in vitro; however this activity needs additional evidence in vivo. May also have lyase activity. Involved in somatic hypermutation of immunoglobulin genes, a process that requires the activity of DNA polymerases to ultimately introduce mutations at both A/T and C/G base pairs. However, POLQ does not play a major role in somatic hypermutation. POLQ-mediated end joining activity is involved in random integration of exogenous DNA hampers. The polypeptide is DNA polymerase theta (Mus musculus (Mouse)).